Here is a 167-residue protein sequence, read N- to C-terminus: C-X-C motif chemokine 15 (167 aa).

An N-terminal signal peptide occupies residues Met1–Thr25. 2 cysteine pairs are disulfide-bonded: Cys30–Cys57 and Cys32–Cys73. The residue at position 157 (Ser157) is a Phosphoserine.

It belongs to the intercrine alpha (chemokine CxC) family. As to expression, expression restricted to the lung, produced by bronchoepithelial cells and is released into the airways. Expressed at low levels in fetal lung.

It localises to the secreted. Functionally, chemotactic for neutrophils. Involved in lung-specific neutrophil trafficking during normal and inflammatory conditions. The protein is C-X-C motif chemokine 15 (Cxcl15) of Mus musculus (Mouse).